Reading from the N-terminus, the 566-residue chain is Transcription factor opdL (566 aa).

The segment at residues C15–C45 is a DNA-binding region (zn(2)-C6 fungal-type).

Its subcellular location is the nucleus. Functionally, transcription factor; part of the gene cluster that mediates the biosynthesis of oxopyrrolidines, polyketide-amino acid hybrid compounds with feature structures of tetramic acid. In Penicillium oxalicum (strain 114-2 / CGMCC 5302) (Penicillium decumbens), this protein is Transcription factor opdL.